A 123-amino-acid chain; its full sequence is Double-stranded DNA deaminase immunity protein (123 aa).

In terms of assembly, the toxic domain forms a 1:1 complex with the DddI immunity protein. This protein blocks the active site of the toxin.

In terms of biological role, immunity protein component of a toxin-immunity protein module, which functions as a cellular contact-dependent growth inhibition (CDI) system. CDI modules allow bacteria to communicate with and inhibit the growth of closely related neighboring bacteria in a contact-dependent fashion. Bacteria that have this module inhibit or kill bacteria without it, giving them a growth advantage. Specifically inhibits the toxic activity of cognate toxin DddA (C-terminal 163 residue fragment) upon expression in E.coli. The chain is Double-stranded DNA deaminase immunity protein from Burkholderia cenocepacia (strain H111).